The chain runs to 513 residues: Probable tubulin polyglutamylase ttll-15 (513 aa).

One can recognise a TTL domain in the interval 73–411 (VTGSYESAHT…STPITKEADI (339 aa)). ATP-binding positions include 216-219 (QKFV), Lys-229, and Asp-231.

It belongs to the tubulin--tyrosine ligase family. In terms of tissue distribution, expressed in hypodermis and pharyngeal muscles.

In terms of biological role, probable polyglutamylase that forms polyglutamate side chains on tubulin. Probably acts when complexed with other proteins. Appears to be dispensable for polar spindle formation in dividing embryonic cells, for cilia-dependent osmotic avoidance and for male mating behavior. Regulates microtubule dynamics in uterine muscle cells. This chain is Probable tubulin polyglutamylase ttll-15, found in Caenorhabditis elegans.